The chain runs to 124 residues: Small ribosomal subunit protein bS6 (124 aa).

The protein belongs to the bacterial ribosomal protein bS6 family.

Binds together with bS18 to 16S ribosomal RNA. This Bordetella avium (strain 197N) protein is Small ribosomal subunit protein bS6.